A 132-amino-acid polypeptide reads, in one-letter code: Small ribosomal subunit protein uS8 (132 aa).

This sequence belongs to the universal ribosomal protein uS8 family. Part of the 30S ribosomal subunit. Contacts proteins S5 and S12.

Its function is as follows. One of the primary rRNA binding proteins, it binds directly to 16S rRNA central domain where it helps coordinate assembly of the platform of the 30S subunit. The protein is Small ribosomal subunit protein uS8 of Staphylococcus haemolyticus (strain JCSC1435).